Consider the following 553-residue polypeptide: Putative transport protein YidE (553 aa).

The next 5 helical transmembrane spans lie at 4 to 24 (IALTVSILALVAVVGLFIGNV), 28 to 48 (GIGLGIGGVLFGGIIVGHFVS), 65 to 85 (FGLILFVYTIGIQVGPGFFAS), 95 to 115 (LFAVLIVIIGGLVTAILHKLF), and 158 to 178 (MSYAMAYPFGICGILFTMWML). 2 consecutive RCK C-terminal domains span residues 191-276 (QQHE…VIGQ) and 279-361 (DTSL…VLGN). Transmembrane regions (helical) follow at residues 371 to 391 (MLPVFIGIGLGVLLGSIPVFV), 393 to 413 (GFPAALKLGLAGGLLIMALIL), 431 to 448 (NLALRELGIVLFLSVVGL), 464 to 484 (LSWIGYGALITAVPLITVGIL), 493 to 513 (YLTMCGMLAGSMTDPPALAFA), and 533 to 553 (LVMFLRIITPQLLAVLFWSIG).

This sequence belongs to the AAE transporter (TC 2.A.81) family. YidE subfamily.

It is found in the cell membrane. The chain is Putative transport protein YidE from Shigella sonnei (strain Ss046).